The sequence spans 124 residues: Putative membrane protein insertion efficiency factor (124 aa).

This sequence belongs to the UPF0161 family.

It localises to the cell inner membrane. Could be involved in insertion of integral membrane proteins into the membrane. This is Putative membrane protein insertion efficiency factor from Psychrobacter arcticus (strain DSM 17307 / VKM B-2377 / 273-4).